We begin with the raw amino-acid sequence, 629 residues long: Embryonic polyadenylate-binding protein B (629 aa).

RRM domains lie at 11 to 89 (ASLY…WSQR), 99 to 175 (GNVF…HFKS), 191 to 268 (TNVY…RAQK), and 294 to 370 (VNLY…LAQR). The 78-residue stretch at 539–616 (QEPLTASLLA…AVAVLQAHQA (78 aa)) folds into the PABC domain.

This sequence belongs to the polyadenylate-binding protein type-1 family. In terms of assembly, interacts with dazl in an RNA-independent manner. The C-terminus can self-associate and also interact with the C-terminus of pabpc1, independently of RNA. RRM 1 and RRM 2 interact with both eif4g1 and paip1, and the C-terminus also interacts with paip1. Prior to oocyte maturation, found in a complex with dazl and pum2 proteins and spdy1 mRNA; pum2 dissociates from the complex during maturation. Interacts with the translation termination factor sup35/erf3.

It is found in the cytoplasm. In terms of biological role, binds and protects the poly(A) tail of mRNA with or without an AU-rich element (ARE) and prevents mRNA deadenylation. Stimulates the translation of mRNAs to which it is bound during early development. This chain is Embryonic polyadenylate-binding protein B (epabp-b), found in Xenopus laevis (African clawed frog).